The chain runs to 367 residues: uncharacterized protein (367 aa).

The disordered stretch occupies residues 333–367 (RERRPTLNAQRAHAAAQQQPRRRNRRQQGTGASAS). The segment covering 341–351 (AQRAHAAAQQQ) has biased composition (low complexity).

This is an uncharacterized protein from Amazona oratrix (yellow-headed parrot).